Here is an 89-residue protein sequence, read N- to C-terminus: Small ribosomal subunit protein uS14A (89 aa).

Belongs to the universal ribosomal protein uS14 family. Part of the 30S ribosomal subunit. Contacts proteins S3 and S10.

Its function is as follows. Binds 16S rRNA, required for the assembly of 30S particles and may also be responsible for determining the conformation of the 16S rRNA at the A site. This is Small ribosomal subunit protein uS14A from Bacillus velezensis (strain DSM 23117 / BGSC 10A6 / LMG 26770 / FZB42) (Bacillus amyloliquefaciens subsp. plantarum).